A 374-amino-acid chain; its full sequence is Zinc finger CCCH domain-containing protein 15 homolog (374 aa).

C3H1-type zinc fingers lie at residues 89-116 and 167-197; these read DPKS…HDLA and YFLE…HCLP.

It belongs to the ZC3H15/TMA46 family.

The polypeptide is Zinc finger CCCH domain-containing protein 15 homolog (Caenorhabditis briggsae).